The following is a 422-amino-acid chain: Glutamyl-tRNA reductase (422 aa).

Residues 49-52 (TCNR), Ser-108, 113-115 (EPQ), and Gln-119 contribute to the substrate site. The active-site Nucleophile is the Cys-50. 188 to 193 (GAGQTI) is a binding site for NADP(+).

This sequence belongs to the glutamyl-tRNA reductase family. Homodimer.

The enzyme catalyses (S)-4-amino-5-oxopentanoate + tRNA(Glu) + NADP(+) = L-glutamyl-tRNA(Glu) + NADPH + H(+). It functions in the pathway porphyrin-containing compound metabolism; protoporphyrin-IX biosynthesis; 5-aminolevulinate from L-glutamyl-tRNA(Glu): step 1/2. Catalyzes the NADPH-dependent reduction of glutamyl-tRNA(Glu) to glutamate 1-semialdehyde (GSA). This is Glutamyl-tRNA reductase from Marinomonas sp. (strain MWYL1).